Consider the following 259-residue polypeptide: Kynurenine formamidase (259 aa).

The HGGXW signature appears at 34 to 38 (HGGAW). Serine 103 serves as the catalytic Nucleophile. Catalysis depends on residues aspartate 196 and histidine 228.

Belongs to the kynurenine formamidase family. As to quaternary structure, homodimer.

The catalysed reaction is N-formyl-L-kynurenine + H2O = L-kynurenine + formate + H(+). The protein operates within amino-acid degradation; L-tryptophan degradation via kynurenine pathway; L-kynurenine from L-tryptophan: step 2/2. Functionally, catalyzes the hydrolysis of N-formyl-L-kynurenine to L-kynurenine, the second step in the kynurenine pathway of tryptophan degradation. Kynurenine may be further oxidized to nicotinic acid, NAD(H) and NADP(H). Required for elimination of toxic metabolites. The chain is Kynurenine formamidase from Meyerozyma guilliermondii (strain ATCC 6260 / CBS 566 / DSM 6381 / JCM 1539 / NBRC 10279 / NRRL Y-324) (Yeast).